The primary structure comprises 310 residues: Aspartate carbamoyltransferase catalytic subunit (310 aa).

Residues R59 and T60 each coordinate carbamoyl phosphate. An L-aspartate-binding site is contributed by K87. R109, H137, and Q140 together coordinate carbamoyl phosphate. L-aspartate is bound by residues R170 and R225. Carbamoyl phosphate contacts are provided by G266 and P267.

This sequence belongs to the aspartate/ornithine carbamoyltransferase superfamily. ATCase family. Heterododecamer (2C3:3R2) of six catalytic PyrB chains organized as two trimers (C3), and six regulatory PyrI chains organized as three dimers (R2).

It carries out the reaction carbamoyl phosphate + L-aspartate = N-carbamoyl-L-aspartate + phosphate + H(+). The protein operates within pyrimidine metabolism; UMP biosynthesis via de novo pathway; (S)-dihydroorotate from bicarbonate: step 2/3. Its function is as follows. Catalyzes the condensation of carbamoyl phosphate and aspartate to form carbamoyl aspartate and inorganic phosphate, the committed step in the de novo pyrimidine nucleotide biosynthesis pathway. In Pelobacter propionicus (strain DSM 2379 / NBRC 103807 / OttBd1), this protein is Aspartate carbamoyltransferase catalytic subunit.